The sequence spans 356 residues: Histidinol-phosphate aminotransferase 2 (356 aa).

N6-(pyridoxal phosphate)lysine is present on lysine 214.

The protein belongs to the class-II pyridoxal-phosphate-dependent aminotransferase family. Histidinol-phosphate aminotransferase subfamily. As to quaternary structure, homodimer. Pyridoxal 5'-phosphate is required as a cofactor.

It carries out the reaction L-histidinol phosphate + 2-oxoglutarate = 3-(imidazol-4-yl)-2-oxopropyl phosphate + L-glutamate. Its pathway is amino-acid biosynthesis; L-histidine biosynthesis; L-histidine from 5-phospho-alpha-D-ribose 1-diphosphate: step 7/9. The protein is Histidinol-phosphate aminotransferase 2 of Dechloromonas aromatica (strain RCB).